A 125-amino-acid polypeptide reads, in one-letter code: MSMQRLCYVLDLHDDAALIAQYERWHRPSEVWPEVVASLQQAGIAELEIFRSGDRLVMLMTVGEDYDPAAKAARDAGDPRIQAWEALMWRFQKALPGSAPGEKWREAGRIFALSEAVSVQQGSAA.

Residue His13 is the Proton donor of the active site.

It belongs to the RbsD / FucU family. FucU mutarotase subfamily.

It catalyses the reaction alpha-L-fucose = beta-L-fucose. Active toward L-galactopyranoside and D-arabinopyranoside but no D-fucopyranoside activity detected. Its function is as follows. Plays a role in the catabolism of L-fucose. Involved in the anomeric conversion of L-fucose. The chain is L-fucose mutarotase from Xanthomonas campestris pv. campestris (strain ATCC 33913 / DSM 3586 / NCPPB 528 / LMG 568 / P 25).